The chain runs to 178 residues: Heavy metal-associated isoprenylated plant protein 30 (178 aa).

Residues 45 to 108 (LQTIDLKVRM…AVRRAGKRAE (64 aa)) enclose the HMA domain. A metal cation is bound by residues C56 and C59. C175 carries the cysteine methyl ester modification. C175 carries S-farnesyl cysteine lipidation. Positions 176–178 (SLM) are cleaved as a propeptide — removed in mature form.

This sequence belongs to the HIPP family. Interacts with ZHD3/HB21, ZHD11/HB29 and ZHD8/HB30.

In terms of biological role, heavy-metal-binding protein. The polypeptide is Heavy metal-associated isoprenylated plant protein 30 (Arabidopsis thaliana (Mouse-ear cress)).